A 169-amino-acid polypeptide reads, in one-letter code: Sulfopyruvate decarboxylase subunit alpha (169 aa).

The protein belongs to the ComD family. Heterododecamer composed of 6 subunits alpha and 6 subunits beta.

It catalyses the reaction 3-sulfopyruvate + H(+) = sulfoacetaldehyde + CO2. It participates in cofactor biosynthesis; coenzyme M biosynthesis; sulfoacetaldehyde from phosphoenolpyruvate and sulfite: step 4/4. Inhibited by oxygen when heated in air at 80 degrees Celsius. The enzyme is reactivated by addition of dithionite. Involved in the biosynthesis of the coenzyme M (2-mercaptoethanesulfonic acid). Catalyzes the decarboxylation of sulfopyruvate to sulfoacetaldehyde. This is Sulfopyruvate decarboxylase subunit alpha from Methanocaldococcus jannaschii (strain ATCC 43067 / DSM 2661 / JAL-1 / JCM 10045 / NBRC 100440) (Methanococcus jannaschii).